Here is a 304-residue protein sequence, read N- to C-terminus: Myelin basic protein (304 aa).

2 stretches are compositionally biased toward basic and acidic residues: residues 1–12 and 22–32; these read MGNHAGKRELNA and NRGESEKKRNL. The interval 1-146 is disordered; it reads MGNHAGKREL…QKRPSQRHGS (146 aa). Glycine 2 is modified (N-acetylalanine). Positions 51–65 are enriched in polar residues; it reads ANQNNGTSSQDTAVT. Residues 95-113 show a composition bias toward basic and acidic residues; sequence FSRDAPGREDNTFKDRPSE. Serine 96 bears the Phosphoserine mark. Over residues 117–130 the composition is skewed to polar residues; the sequence is LQTIQEDSAATSES. A phosphoserine mark is found at serine 141 and serine 146. Phosphotyrosine is present on tyrosine 148. Residue threonine 151 is modified to Phosphothreonine. The residue at position 153 (serine 153) is a Phosphoserine. At threonine 154 the chain carries Phosphothreonine. 2 positions are modified to citrulline; in form C8: arginine 159 and arginine 165. A Citrulline modification is found at arginine 167. A Phosphothreonine modification is found at threonine 169. The residue at position 174 (serine 174) is a Phosphoserine. Arginine 177 and arginine 183 each carry omega-N-methylarginine. The induces experimental autoimmune encephalomyelitis (EAE) 1 stretch occupies residues 179–222; sequence FGGDRGAPKRGSGKDSHHPARTAHYGSLPQKSHGRTQDENPVVH. Residues 180-249 form a disordered region; that stretch reads GGDRGAPKRG…GRGLSLSRFS (70 aa). The residue at position 190 (serine 190) is a Phosphoserine. Arginine 199 bears the Citrulline mark. The residue at position 203 (tyrosine 203) is a Phosphotyrosine. Serine 210 carries the phosphoserine modification. Threonine 214 and threonine 229 each carry phosphothreonine. At arginine 231 the chain carries Citrulline. Threonine 232 bears the Phosphothreonine mark. Glutamine 237 carries the post-translational modification Deamidated glutamine. At arginine 241 the chain carries Omega-N-methylarginine; alternate. Arginine 241 bears the Symmetric dimethylarginine; alternate mark. Positions 246–256 are induces experimental autoimmune encephalomyelitis (EAE) 2; the sequence is SRFSWGAEGQR. At serine 249 the chain carries Phosphoserine. Residues arginine 256 and arginine 264 each carry the citrulline; in form C8 modification. A Deamidated glutamine modification is found at glutamine 281. Citrulline; in form C8 is present on arginine 293. At serine 295 the chain carries Phosphoserine. At arginine 296 the chain carries Citrulline. Serine 299 carries the phosphoserine; by UHMK1 modification. The residue at position 303 (arginine 303) is a Citrulline. Arginine 304 bears the Citrulline; in form C8 mark.

This sequence belongs to the myelin basic protein family. In terms of assembly, homodimer. Isoform 3 exists as a homodimer. Several charge isomers of MBP; C1 (the most cationic, least modified, and most abundant form), C2, C3, C4, C5, C6, C7, C8-A and C8-B (the least cationic form); are produced as a result of optional PTM, such as phosphorylation, deamidation of glutamine or asparagine, arginine citrullination and methylation. C8-A and C8-B contain each two mass isoforms termed C8-A(H), C8-A(L), C8-B(H) and C8-B(L), (H) standing for higher and (L) for lower molecular weight. C3, C4 and C5 are phosphorylated. The ratio of methylated arginine residues decreases during aging, making the protein more cationic. In terms of processing, the N-terminal alanine is acetylated (isoform 3, isoform 4, isoform 5 and isoform 6). Post-translationally, arg-241 was found to be 6% monomethylated and 60% symmetrically dimethylated. Proteolytically cleaved in B cell lysosomes by cathepsin CTSG which degrades the major immunogenic MBP epitope and prevents the activation of MBP-specific autoreactive T cells. In terms of processing, phosphorylated by TAOK2, VRK2, MAPK11, MAPK12, MAPK14 and MINK1. In terms of tissue distribution, MBP isoforms are found in both the central and the peripheral nervous system, whereas Golli-MBP isoforms are expressed in fetal thymus, spleen and spinal cord, as well as in cell lines derived from the immune system.

It is found in the myelin membrane. The protein localises to the nucleus. The classic group of MBP isoforms (isoform 4-isoform 14) are with PLP the most abundant protein components of the myelin membrane in the CNS. They have a role in both its formation and stabilization. The smaller isoforms might have an important role in remyelination of denuded axons in multiple sclerosis. The non-classic group of MBP isoforms (isoform 1-isoform 3/Golli-MBPs) may preferentially have a role in the early developing brain long before myelination, maybe as components of transcriptional complexes, and may also be involved in signaling pathways in T-cells and neural cells. Differential splicing events combined with optional post-translational modifications give a wide spectrum of isomers, with each of them potentially having a specialized function. Induces T-cell proliferation. This Homo sapiens (Human) protein is Myelin basic protein (MBP).